Reading from the N-terminus, the 99-residue chain is Large ribosomal subunit protein bL27 (99 aa).

Positions 1 to 9 (MLIMNLQLF) are excised as a propeptide.

Belongs to the bacterial ribosomal protein bL27 family. The N-terminus is cleaved by ribosomal processing cysteine protease Prp.

This Clostridium botulinum (strain Alaska E43 / Type E3) protein is Large ribosomal subunit protein bL27.